The primary structure comprises 408 residues: 26S proteasome regulatory subunit 6B homolog (408 aa).

Position 2 is an N-acetylalanine (A2). S16 carries the phosphoserine modification. A coiled-coil region spans residues 28 to 75 (EDLYGRLKSLERQLEFTDIQEEYVKDEQKNLKRELLRAQEEVKRIQSV). Residue 196 to 203 (GPPGTGKT) coordinates ATP.

The protein belongs to the AAA ATPase family. In terms of assembly, component of the 19S regulatory particle (RP/PA700) base subcomplex of the 26S proteasome. The 26S proteasome is composed of a core protease (CP), known as the 20S proteasome, capped at one or both ends by the 19S regulatory particle (RP/PA700). The RP/PA700 complex is composed of at least 17 different subunits in two subcomplexes, the base and the lid, which form the portions proximal and distal to the 20S proteolytic core, respectively. As to expression, expressed in dark-grown etiolated seedlings, roots, leaves, stems and flowers.

The protein localises to the cytoplasm. It is found in the nucleus. In terms of biological role, the 26S proteasome is involved in the ATP-dependent degradation of ubiquitinated proteins. The regulatory (or ATPase) complex confers ATP dependency and substrate specificity to the 26S complex. This is 26S proteasome regulatory subunit 6B homolog (RPT3) from Arabidopsis thaliana (Mouse-ear cress).